A 153-amino-acid polypeptide reads, in one-letter code: NAD(P)H-quinone oxidoreductase subunit N (153 aa).

Belongs to the complex I NdhN subunit family. As to quaternary structure, NDH-1 can be composed of about 15 different subunits; different subcomplexes with different compositions have been identified which probably have different functions.

The protein resides in the cellular thylakoid membrane. The catalysed reaction is a plastoquinone + NADH + (n+1) H(+)(in) = a plastoquinol + NAD(+) + n H(+)(out). It carries out the reaction a plastoquinone + NADPH + (n+1) H(+)(in) = a plastoquinol + NADP(+) + n H(+)(out). In terms of biological role, NDH-1 shuttles electrons from an unknown electron donor, via FMN and iron-sulfur (Fe-S) centers, to quinones in the respiratory and/or the photosynthetic chain. The immediate electron acceptor for the enzyme in this species is believed to be plastoquinone. Couples the redox reaction to proton translocation, and thus conserves the redox energy in a proton gradient. Cyanobacterial NDH-1 also plays a role in inorganic carbon-concentration. The chain is NAD(P)H-quinone oxidoreductase subunit N from Parasynechococcus marenigrum (strain WH8102).